A 122-amino-acid chain; its full sequence is Small ribosomal subunit protein bS6 (122 aa).

The interval 95–122 (AETAPSPMMKEVQREEAKKAAAQSEQAA) is disordered.

This sequence belongs to the bacterial ribosomal protein bS6 family.

Binds together with bS18 to 16S ribosomal RNA. The chain is Small ribosomal subunit protein bS6 from Ralstonia nicotianae (strain ATCC BAA-1114 / GMI1000) (Ralstonia solanacearum).